The chain runs to 294 residues: Flavin-dependent thymidylate synthase (294 aa).

The region spanning 27-250 is the ThyX domain; it reads GFIRVIDYMG…PFTYEAFEEY (224 aa). FAD is bound by residues Thr-73, 96-98, and Glu-104; that span reads RHR. Residues 93–96, 104–108, and Arg-189 contribute to the dUMP site; these read QWIR and EYSAR. Positions 96 to 106 match the ThyX motif motif; it reads RHRTASVNEYS. Residues 205–207 and His-211 contribute to the FAD site; that span reads NLH. Residue Arg-216 coordinates dUMP. Catalysis depends on Arg-216, which acts as the Involved in ionization of N3 of dUMP, leading to its activation.

It belongs to the thymidylate synthase ThyX family. Homotetramer. It depends on FAD as a cofactor.

It catalyses the reaction dUMP + (6R)-5,10-methylene-5,6,7,8-tetrahydrofolate + NADPH + H(+) = dTMP + (6S)-5,6,7,8-tetrahydrofolate + NADP(+). It participates in pyrimidine metabolism; dTTP biosynthesis. Catalyzes the reductive methylation of 2'-deoxyuridine-5'-monophosphate (dUMP) to 2'-deoxythymidine-5'-monophosphate (dTMP) while utilizing 5,10-methylenetetrahydrofolate (mTHF) as the methyl donor, and NADPH and FADH(2) as the reductant. This is Flavin-dependent thymidylate synthase from Rickettsia typhi (strain ATCC VR-144 / Wilmington).